The sequence spans 356 residues: 3'-5' exonuclease (356 aa).

The segment at M1–E120 is disordered. Composition is skewed to basic and acidic residues over residues T29 to P56 and K71 to E85. The span at L99–S113 shows a compositional bias: low complexity. Phosphoserine occurs at positions 105 and 113. In terms of domain architecture, 3'-5' exonuclease spans T155 to Q316. Mg(2+) contacts are provided by D165, E167, and D303.

This sequence belongs to the WRNexo family.

The protein localises to the nucleus. In terms of biological role, has exonuclease activity on both single-stranded and duplex templates bearing overhangs, but not blunt ended duplex DNA, and cleaves in a 3'-5' direction. Essential for the formation of DNA replication focal centers. Has an important role in maintaining genome stability. The polypeptide is 3'-5' exonuclease (Drosophila willistoni (Fruit fly)).